We begin with the raw amino-acid sequence, 205 residues long: Holliday junction branch migration complex subunit RuvA (205 aa).

The interval 1-64 is domain I; that stretch reads MIGKLRGIVD…DEAIRLIGFT (64 aa). The tract at residues 65–143 is domain II; it reads TDSEREWFRL…DSMGLSAALE (79 aa). The segment at 144–152 is flexible linker; sequence VGVNGEAVS. The tract at residues 153–205 is domain III; sequence SVSAPARDAVSALVNLGYPQAQAMGAVAAAAKRLDDAASTEQLIRHGLKELAR.

Belongs to the RuvA family. Homotetramer. Forms an RuvA(8)-RuvB(12)-Holliday junction (HJ) complex. HJ DNA is sandwiched between 2 RuvA tetramers; dsDNA enters through RuvA and exits via RuvB. An RuvB hexamer assembles on each DNA strand where it exits the tetramer. Each RuvB hexamer is contacted by two RuvA subunits (via domain III) on 2 adjacent RuvB subunits; this complex drives branch migration. In the full resolvosome a probable DNA-RuvA(4)-RuvB(12)-RuvC(2) complex forms which resolves the HJ.

Its subcellular location is the cytoplasm. In terms of biological role, the RuvA-RuvB-RuvC complex processes Holliday junction (HJ) DNA during genetic recombination and DNA repair, while the RuvA-RuvB complex plays an important role in the rescue of blocked DNA replication forks via replication fork reversal (RFR). RuvA specifically binds to HJ cruciform DNA, conferring on it an open structure. The RuvB hexamer acts as an ATP-dependent pump, pulling dsDNA into and through the RuvAB complex. HJ branch migration allows RuvC to scan DNA until it finds its consensus sequence, where it cleaves and resolves the cruciform DNA. This Parvibaculum lavamentivorans (strain DS-1 / DSM 13023 / NCIMB 13966) protein is Holliday junction branch migration complex subunit RuvA.